The primary structure comprises 434 residues: DNA primase large subunit PriL (434 aa).

Cys281, Cys392, Cys403, and Cys409 together coordinate [4Fe-4S] cluster.

This sequence belongs to the eukaryotic-type primase large subunit family. Heterodimer of a small subunit (PriS) and a large subunit (PriL). Requires [4Fe-4S] cluster as cofactor.

Regulatory subunit of DNA primase, an RNA polymerase that catalyzes the synthesis of short RNA molecules used as primers for DNA polymerase during DNA replication. Stabilizes and modulates the activity of the small subunit, increasing the rate of DNA synthesis, and conferring RNA synthesis capability. The DNA polymerase activity may enable DNA primase to also catalyze primer extension after primer synthesis. May also play a role in DNA repair. The polypeptide is DNA primase large subunit PriL (Methanothermobacter thermautotrophicus (strain ATCC 29096 / DSM 1053 / JCM 10044 / NBRC 100330 / Delta H) (Methanobacterium thermoautotrophicum)).